We begin with the raw amino-acid sequence, 379 residues long: UDP-4-amino-4-deoxy-L-arabinose--oxoglutarate aminotransferase (379 aa).

N6-(pyridoxal phosphate)lysine is present on Lys-182.

This sequence belongs to the DegT/DnrJ/EryC1 family. ArnB subfamily. As to quaternary structure, homodimer. Pyridoxal 5'-phosphate serves as cofactor.

It catalyses the reaction UDP-4-amino-4-deoxy-beta-L-arabinose + 2-oxoglutarate = UDP-beta-L-threo-pentopyranos-4-ulose + L-glutamate. The protein operates within nucleotide-sugar biosynthesis; UDP-4-deoxy-4-formamido-beta-L-arabinose biosynthesis; UDP-4-deoxy-4-formamido-beta-L-arabinose from UDP-alpha-D-glucuronate: step 2/3. It functions in the pathway bacterial outer membrane biogenesis; lipopolysaccharide biosynthesis. Functionally, catalyzes the conversion of UDP-4-keto-arabinose (UDP-Ara4O) to UDP-4-amino-4-deoxy-L-arabinose (UDP-L-Ara4N). The modified arabinose is attached to lipid A and is required for resistance to polymyxin and cationic antimicrobial peptides. This chain is UDP-4-amino-4-deoxy-L-arabinose--oxoglutarate aminotransferase, found in Escherichia coli (strain K12 / DH10B).